Consider the following 213-residue polypeptide: High frequency lysogenization protein HflD homolog (213 aa).

Positions 79–126 (QGLNAELTRYTLSLMVLERKLSSAKGALDTLGNRINGLQRQLEHFDLQ) form a coiled coil.

This sequence belongs to the HflD family.

Its subcellular location is the cytoplasm. The protein resides in the cell inner membrane. In Shigella boydii serotype 18 (strain CDC 3083-94 / BS512), this protein is High frequency lysogenization protein HflD homolog.